Reading from the N-terminus, the 266-residue chain is Phosphatidylserine decarboxylase proenzyme (266 aa).

Catalysis depends on charge relay system; for autoendoproteolytic cleavage activity residues Asp-74, His-135, and Ser-237. Ser-237 acts as the Schiff-base intermediate with substrate; via pyruvic acid; for decarboxylase activity in catalysis. Ser-237 is subject to Pyruvic acid (Ser); by autocatalysis.

It belongs to the phosphatidylserine decarboxylase family. PSD-B subfamily. Prokaryotic type I sub-subfamily. In terms of assembly, heterodimer of a large membrane-associated beta subunit and a small pyruvoyl-containing alpha subunit. The cofactor is pyruvate. Is synthesized initially as an inactive proenzyme. Formation of the active enzyme involves a self-maturation process in which the active site pyruvoyl group is generated from an internal serine residue via an autocatalytic post-translational modification. Two non-identical subunits are generated from the proenzyme in this reaction, and the pyruvate is formed at the N-terminus of the alpha chain, which is derived from the carboxyl end of the proenzyme. The autoendoproteolytic cleavage occurs by a canonical serine protease mechanism, in which the side chain hydroxyl group of the serine supplies its oxygen atom to form the C-terminus of the beta chain, while the remainder of the serine residue undergoes an oxidative deamination to produce ammonia and the pyruvoyl prosthetic group on the alpha chain. During this reaction, the Ser that is part of the protease active site of the proenzyme becomes the pyruvoyl prosthetic group, which constitutes an essential element of the active site of the mature decarboxylase.

The protein resides in the cell membrane. It catalyses the reaction a 1,2-diacyl-sn-glycero-3-phospho-L-serine + H(+) = a 1,2-diacyl-sn-glycero-3-phosphoethanolamine + CO2. The protein operates within phospholipid metabolism; phosphatidylethanolamine biosynthesis; phosphatidylethanolamine from CDP-diacylglycerol: step 2/2. Catalyzes the formation of phosphatidylethanolamine (PtdEtn) from phosphatidylserine (PtdSer). The sequence is that of Phosphatidylserine decarboxylase proenzyme from Campylobacter jejuni subsp. jejuni serotype O:2 (strain ATCC 700819 / NCTC 11168).